Here is a 231-residue protein sequence, read N- to C-terminus: Large ribosomal subunit protein uL1 (231 aa).

Belongs to the universal ribosomal protein uL1 family. In terms of assembly, part of the 50S ribosomal subunit.

Functionally, binds directly to 23S rRNA. The L1 stalk is quite mobile in the ribosome, and is involved in E site tRNA release. Protein L1 is also a translational repressor protein, it controls the translation of the L11 operon by binding to its mRNA. This chain is Large ribosomal subunit protein uL1, found in Buchnera aphidicola subsp. Acyrthosiphon pisum (strain APS) (Acyrthosiphon pisum symbiotic bacterium).